The following is a 171-amino-acid chain: Moubatin (171 aa).

The first 15 residues, 1–15 (MMLVLTTLIFSFSAS), serve as a signal peptide directing secretion. Intrachain disulfides connect Cys23–Cys144, Cys55–Cys166, and Cys118–Cys145.

This sequence belongs to the calycin superfamily. Lipocalin family. Post-translationally, the N-terminus is blocked. In terms of tissue distribution, expressed in salivary glands.

The protein resides in the secreted. Its function is as follows. Tick salivary platelet aggregation inhibitor that plays an important part in the anti-hemostatic strategy of ticks. Acts by scavenging thromboxane A2 (TXA2), a potent inducer of platelet aggregation and blood vessel constriction. As a consequence, is a specific inhibitor of collagen-induced platelet aggregation. In addition, it also acts as a potent inhibitor of TXA2-mediated vasoconstriction. Has also been found to bind leukotriene B4 (LTB4) (which also derives from arachidonic acid, as TXA2) with affinities in the nanomolar range. It does not interact with complement protein C5. The protein is Moubatin of Ornithodoros moubata (Soft tick).